Consider the following 189-residue polypeptide: HGPRTase-like protein (189 aa).

Belongs to the purine/pyrimidine phosphoribosyltransferase family. Archaeal HPRT subfamily.

Its function is as follows. May catalyze a purine salvage reaction, the substrate is unknown. This chain is HGPRTase-like protein, found in Natronomonas pharaonis (strain ATCC 35678 / DSM 2160 / CIP 103997 / JCM 8858 / NBRC 14720 / NCIMB 2260 / Gabara) (Halobacterium pharaonis).